Consider the following 374-residue polypeptide: Ribosomal RNA large subunit methyltransferase G (374 aa).

The protein belongs to the methyltransferase superfamily. RlmG family.

The protein resides in the cytoplasm. The enzyme catalyses guanosine(1835) in 23S rRNA + S-adenosyl-L-methionine = N(2)-methylguanosine(1835) in 23S rRNA + S-adenosyl-L-homocysteine + H(+). Specifically methylates the guanine in position 1835 (m2G1835) of 23S rRNA. In Pseudomonas syringae pv. tomato (strain ATCC BAA-871 / DC3000), this protein is Ribosomal RNA large subunit methyltransferase G.